An 82-amino-acid polypeptide reads, in one-letter code: RNA-binding protein Hfq (82 aa).

The Sm domain maps to 11–71 (DTFLNHVRKT…ISTIMPGAPI (61 aa)).

This sequence belongs to the Hfq family. In terms of assembly, homohexamer.

Its function is as follows. RNA chaperone that binds small regulatory RNA (sRNAs) and mRNAs to facilitate mRNA translational regulation in response to envelope stress, environmental stress and changes in metabolite concentrations. Also binds with high specificity to tRNAs. The chain is RNA-binding protein Hfq from Nitrobacter winogradskyi (strain ATCC 25391 / DSM 10237 / CIP 104748 / NCIMB 11846 / Nb-255).